The primary structure comprises 217 residues: HTH-type transcriptional regulator EthR (217 aa).

The segment at 1-22 (MTTASQTRTPRGRRSARPSGDD) is disordered. One can recognise an HTH tetR-type domain in the interval 21–81 (DDREAAILAT…SLIDPLIKRA (61 aa)). A DNA-binding region (H-T-H motif) is located at residues 44-63 (SVDDLAKGAGISRPTFYFYF).

Homodimer.

Involved in the repression of teh monooxygenase EthA which is responsible of the formation of the active metabolite of ethionamide (ETH). The sequence is that of HTH-type transcriptional regulator EthR (ethR) from Mycolicibacterium smegmatis (strain ATCC 700084 / mc(2)155) (Mycobacterium smegmatis).